Reading from the N-terminus, the 282-residue chain is Transcription factor HES-1 (282 aa).

Residues 1-44 are disordered; sequence MPADIMEKNSSSPVAATPASVNTTPDKPKTASEHRKSSKPIMEK. Low complexity predominate over residues 10–21; the sequence is SSSPVAATPASV. Basic and acidic residues predominate over residues 26-35; that stretch reads DKPKTASEHR. One can recognise a bHLH domain in the interval 34 to 91; the sequence is HRKSSKPIMEKRRRARINESLSQLKTLILDALKKDSSRHSKLEKADILEMTVKHLRNL. One can recognise an Orange domain in the interval 110 to 143; the sequence is YRAGFSECMNEVTRFLSTCEGVNTEVRTRLLGHL. Disordered regions lie at residues 158-204 and 256-282; these read QAHP…GSAP and TSVG…PWRN. 2 stretches are compositionally biased toward pro residues: residues 164–174 and 182–202; these read QAPPPPPPSGP and FAPP…PPGS. Positions 264 to 275 are enriched in low complexity; sequence SPSSGSSLTSDS. The WRPW motif motif lies at 277–280; the sequence is WRPW.

As to quaternary structure, interacts with SIRT1. Transcription repression requires formation of a complex with a corepressor protein of the Groucho/TLE family. Interacts (via WPRW motif) with TLE1, and more weakly with TLE2. Interacts with HES6. Interacts with an FA complex, composed of FANCA, FANCF, FANCG and FANCL, but not of FANCC, nor FANCE. As to expression, expressed at high levels in undifferentiated neural precursor cells, but the level of expression decreases as neural differentiation proceeds.

The protein localises to the nucleus. Its function is as follows. Transcriptional repressor of genes that require a bHLH protein for their transcription. May act as a negative regulator of myogenesis by inhibiting the functions of MYOD1 and ASH1. Binds DNA on N-box motifs: 5'-CACNAG-3' with high affinity and on E-box motifs: 5'-CANNTG-3' with low affinity. May play a role in a functional FA core complex response to DNA cross-link damage, being required for the stability and nuclear localization of FA core complex proteins, as well as for FANCD2 monoubiquitination in response to DNA damage. The polypeptide is Transcription factor HES-1 (Hes1) (Mus musculus (Mouse)).